A 499-amino-acid chain; its full sequence is Protein singed wings 2 (499 aa).

The first 29 residues, 1–29, serve as a signal peptide directing secretion; sequence MPSGVFQKRPKAAETISLFCMILIRLSRA. 2 LRR repeats span residues 154 to 175 and 178 to 199; these read ELHT…TFKR and PLKV…LLLP. The 56-residue stretch at 210 to 265 folds into the LRRCT 1 domain; that stretch reads NPWNCTRNFKWLLLQPEKGRLVVDRDELICTDRKYKERQMLMVMHYKLELKRQCQS. LRR repeat units follow at residues 307-328, 332-353, and 357-378; these read NTTT…RDNP, HVVD…EDTY, and NFRL…ALDN. In terms of domain architecture, LRRCT 2 spans 394–449; sequence NPWHCTCKFGSRMRELLTKYKDIVRDAWNVSCTYRLDDDQLLAKVLTLSRQEMCNL.

Its function is as follows. Has a role in the ecdysone induced cascade; probably indirect control of 'late' ecdysone genes. This Drosophila melanogaster (Fruit fly) protein is Protein singed wings 2.